The primary structure comprises 296 residues: Lipoyl synthase (296 aa).

Residues cysteine 37, cysteine 42, cysteine 48, cysteine 63, cysteine 67, cysteine 70, and serine 276 each contribute to the [4Fe-4S] cluster site. Positions 49-265 (WSKKHATMMI…ERVARTKGFL (217 aa)) constitute a Radical SAM core domain.

The protein belongs to the radical SAM superfamily. Lipoyl synthase family. [4Fe-4S] cluster serves as cofactor.

Its subcellular location is the cytoplasm. It carries out the reaction [[Fe-S] cluster scaffold protein carrying a second [4Fe-4S](2+) cluster] + N(6)-octanoyl-L-lysyl-[protein] + 2 oxidized [2Fe-2S]-[ferredoxin] + 2 S-adenosyl-L-methionine + 4 H(+) = [[Fe-S] cluster scaffold protein] + N(6)-[(R)-dihydrolipoyl]-L-lysyl-[protein] + 4 Fe(3+) + 2 hydrogen sulfide + 2 5'-deoxyadenosine + 2 L-methionine + 2 reduced [2Fe-2S]-[ferredoxin]. The protein operates within protein modification; protein lipoylation via endogenous pathway; protein N(6)-(lipoyl)lysine from octanoyl-[acyl-carrier-protein]: step 2/2. In terms of biological role, catalyzes the radical-mediated insertion of two sulfur atoms into the C-6 and C-8 positions of the octanoyl moiety bound to the lipoyl domains of lipoate-dependent enzymes, thereby converting the octanoylated domains into lipoylated derivatives. This Rickettsia canadensis (strain McKiel) protein is Lipoyl synthase.